A 293-amino-acid chain; its full sequence is Methylsterol monooxygenase 1 (293 aa).

The next 2 helical transmembrane spans lie at 55-75 and 100-120; these read LIVHEALYFSFCLPGFLFQFI and VLLFNHFCIQLPLICGTYYFT. Residues 145–274 enclose the Fatty acid hydroxylase domain; that stretch reads CAVIEDTWHY…FTWWDRIFGT (130 aa). The Histidine box-1 motif lies at 157-161; that stretch reads HRLLH. A Histidine box-2 motif is present at residues 170-174; the sequence is HKVHH. The chain crosses the membrane as a helical span at residues 199-219; sequence FFIGIVLLCDHVILLWAWVTI. The Histidine box-3 motif lies at 249–255; sequence HHDFHHM.

The protein belongs to the sterol desaturase family. Requires Fe cation as cofactor. Ubiquitinated by MARCHF6, leading to proteasomal degradation.

The protein resides in the endoplasmic reticulum membrane. The catalysed reaction is 4,4-dimethyl-5alpha-cholest-7-en-3beta-ol + 6 Fe(II)-[cytochrome b5] + 3 O2 + 5 H(+) = 4alpha-carboxy-4beta-methyl-5alpha-cholest-7-ene-3beta-ol + 6 Fe(III)-[cytochrome b5] + 4 H2O. The enzyme catalyses 4,4-dimethyl-5alpha-cholesta-8,24-dien-3beta-ol + 6 Fe(II)-[cytochrome b5] + 3 O2 + 5 H(+) = 4beta-methylzymosterol-4alpha-carboxylate + 6 Fe(III)-[cytochrome b5] + 4 H2O. It catalyses the reaction 4alpha-methylzymosterol + 6 Fe(II)-[cytochrome b5] + 3 O2 + 5 H(+) = 4alpha-carboxyzymosterol + 6 Fe(III)-[cytochrome b5] + 4 H2O. It carries out the reaction 4alpha-methyl-5alpha-cholest-7-en-3beta-ol + 6 Fe(II)-[cytochrome b5] + 3 O2 + 5 H(+) = 4alpha-carboxy-5alpha-cholest-7-en-3beta-ol + 6 Fe(III)-[cytochrome b5] + 4 H2O. The catalysed reaction is 4,4-dimethyl-5alpha-cholest-8-en-3beta-ol + 6 Fe(II)-[cytochrome b5] + 3 O2 + 5 H(+) = 4alpha-carboxy-4beta-methyl-5alpha-cholest-8-en-3beta-ol + 6 Fe(III)-[cytochrome b5] + 4 H2O. The enzyme catalyses 4alpha-methyl-5alpha-cholest-8-en-3beta-ol + 6 Fe(II)-[cytochrome b5] + 3 O2 + 5 H(+) = 4alpha-carboxy-5alpha-cholest-8-ene-3beta-ol + 6 Fe(III)-[cytochrome b5] + 4 H2O. It participates in steroid biosynthesis; zymosterol biosynthesis; zymosterol from lanosterol: step 3/6. Its pathway is steroid biosynthesis; cholesterol biosynthesis. Functionally, catalyzes the three-step monooxygenation required for the demethylation of 4,4-dimethyl and 4alpha-methylsterols, which can be subsequently metabolized to cholesterol. This chain is Methylsterol monooxygenase 1 (MSMO1), found in Macaca fascicularis (Crab-eating macaque).